Consider the following 266-residue polypeptide: 15-hydroxyprostaglandin dehydrogenase [NAD(+)] (266 aa).

NAD(+) is bound by residues 12–20 (GAAQGIGRA), 36–37 (DW), 63–65 (CDV), and Asn91. Ser138 and Gln148 together coordinate substrate. The Proton acceptor role is filled by Tyr151. NAD(+)-binding positions include 151 to 155 (YCASK) and 186 to 188 (VDT).

This sequence belongs to the short-chain dehydrogenases/reductases (SDR) family. As to quaternary structure, homodimer.

It is found in the cytoplasm. The catalysed reaction is prostaglandin E2 + NAD(+) = 15-oxoprostaglandin E2 + NADH + H(+). It catalyses the reaction (15S)-hydroxy-(5Z,8Z,11Z,13E)-eicosatetraenoate + NAD(+) = 15-oxo-(5Z,8Z,11Z,13E)-eicosatetraenoate + NADH + H(+). It carries out the reaction (11R)-hydroxy-(5Z,8Z,12E,14Z)-eicosatetraenoate + NAD(+) = 11-oxo-(5Z,8Z,12E,14Z)-eicosatetraenoate + NADH + H(+). The enzyme catalyses lipoxin A4 + NAD(+) = 15-oxo-(5S,6R)-dihydroxy-(7E,9E,11Z,13E)-eicosatetraenoate + NADH + H(+). The catalysed reaction is 15-oxo-(5S,6R)-dihydroxy-(7E,9E,11Z)-eicosatrienoate + NADH + H(+) = (5S,6R,15S)-trihydroxy-(7E,9E,11Z)-eicosatrienoate + NAD(+). It catalyses the reaction prostaglandin A1 + NAD(+) = 15-oxo-prostaglandin A1 + NADH + H(+). It carries out the reaction prostaglandin E1 + NAD(+) = 15-oxoprostaglandin E1 + NADH + H(+). The enzyme catalyses 14-hydroxy-(4Z,7Z,10Z,12E,16Z,19Z)-docosahexaenoate + NAD(+) = 14-oxo-(4Z,7Z,10Z,12E,16Z,19Z)-docosahexaenoate + NADH + H(+). The catalysed reaction is resolvin E1 + NAD(+) = 18-oxo-resolvin E1 + NADH + H(+). It catalyses the reaction resolvin D1 + NAD(+) = 8-oxoresolvin D1 + NADH + H(+). It carries out the reaction resolvin D1 + NAD(+) = 17-oxoresolvin D1 + NADH + H(+). The enzyme catalyses resolvin D2 + NAD(+) = 7-oxoresolvin D2 + NADH + H(+). The catalysed reaction is resolvin D2 + NAD(+) = 16-oxoresolvin D2 + NADH + H(+). Functionally, catalyzes the NAD-dependent dehydrogenation (oxidation) of a broad array of hydroxylated polyunsaturated fatty acids (mainly eicosanoids and docosanoids, including prostaglandins, lipoxins and resolvins), yielding their corresponding keto (oxo) metabolites. Decreases the levels of the pro-proliferative prostaglandins such as prostaglandin E2 (whose activity is increased in cancer because of an increase in the expression of cyclooxygenase 2) and generates oxo-fatty acid products that can profoundly influence cell function by abrogating pro-inflammatory cytokine expression. Converts resolvins E1, D1 and D2 to their oxo products, which represents a mode of resolvin inactivation. Resolvin E1 plays important roles during the resolution phase of acute inflammation, while resolvins D1 and D2 have a unique role in obesity-induced adipose inflammation. The sequence is that of 15-hydroxyprostaglandin dehydrogenase [NAD(+)] (HPGD) from Bos taurus (Bovine).